The primary structure comprises 175 residues: NADH-ubiquinone oxidoreductase chain 6 (175 aa).

A run of 5 helical transmembrane segments spans residues 1–21 (MMTY…VGFS), 25–45 (SPIY…GIIM), 47–67 (FGGS…MLVV), 88–108 (TVMG…LYVL), and 149–169 (YGAW…LVIL).

Belongs to the complex I subunit 6 family. In terms of assembly, core subunit of respiratory chain NADH dehydrogenase (Complex I) which is composed of 45 different subunits.

The protein localises to the mitochondrion inner membrane. It catalyses the reaction a ubiquinone + NADH + 5 H(+)(in) = a ubiquinol + NAD(+) + 4 H(+)(out). Core subunit of the mitochondrial membrane respiratory chain NADH dehydrogenase (Complex I) which catalyzes electron transfer from NADH through the respiratory chain, using ubiquinone as an electron acceptor. Essential for the catalytic activity and assembly of complex I. The sequence is that of NADH-ubiquinone oxidoreductase chain 6 (MT-ND6) from Equus asinus (Donkey).